The primary structure comprises 254 residues: 3-deoxy-manno-octulosonate cytidylyltransferase (254 aa).

This sequence belongs to the KdsB family.

The protein resides in the cytoplasm. The enzyme catalyses 3-deoxy-alpha-D-manno-oct-2-ulosonate + CTP = CMP-3-deoxy-beta-D-manno-octulosonate + diphosphate. Its pathway is nucleotide-sugar biosynthesis; CMP-3-deoxy-D-manno-octulosonate biosynthesis; CMP-3-deoxy-D-manno-octulosonate from 3-deoxy-D-manno-octulosonate and CTP: step 1/1. It functions in the pathway bacterial outer membrane biogenesis; lipopolysaccharide biosynthesis. Activates KDO (a required 8-carbon sugar) for incorporation into bacterial lipopolysaccharide in Gram-negative bacteria. This chain is 3-deoxy-manno-octulosonate cytidylyltransferase, found in Bordetella petrii (strain ATCC BAA-461 / DSM 12804 / CCUG 43448).